We begin with the raw amino-acid sequence, 554 residues long: Phosphomethylpyrimidine synthase (554 aa).

Substrate contacts are provided by residues N191, M220, Y249, H285, 305–307 (SRG), 346–349 (DGLR), and E385. H389 serves as a coordination point for Zn(2+). Y412 serves as a coordination point for substrate. H453 contributes to the Zn(2+) binding site. C533, C536, and C541 together coordinate [4Fe-4S] cluster.

This sequence belongs to the ThiC family. Homodimer. The cofactor is [4Fe-4S] cluster.

The catalysed reaction is 5-amino-1-(5-phospho-beta-D-ribosyl)imidazole + S-adenosyl-L-methionine = 4-amino-2-methyl-5-(phosphooxymethyl)pyrimidine + CO + 5'-deoxyadenosine + formate + L-methionine + 3 H(+). It participates in cofactor biosynthesis; thiamine diphosphate biosynthesis. Catalyzes the synthesis of the hydroxymethylpyrimidine phosphate (HMP-P) moiety of thiamine from aminoimidazole ribotide (AIR) in a radical S-adenosyl-L-methionine (SAM)-dependent reaction. The chain is Phosphomethylpyrimidine synthase from Ehrlichia chaffeensis (strain ATCC CRL-10679 / Arkansas).